Consider the following 337-residue polypeptide: GTPase Obg (337 aa).

An Obg domain is found at 1 to 159 (MQFIDYVKIY…RWVILELKLL (159 aa)). Positions 160-331 (ADVGLIGLPN…LLHYLSEKVG (172 aa)) constitute an OBG-type G domain. Residues 166–173 (GLPNAGKS), 191–195 (FTTLI), 213–216 (DIPG), 283–286 (TKID), and 312–314 (SAV) contribute to the GTP site. Positions 173 and 193 each coordinate Mg(2+).

The protein belongs to the TRAFAC class OBG-HflX-like GTPase superfamily. OBG GTPase family. As to quaternary structure, monomer. Mg(2+) serves as cofactor.

It is found in the cytoplasm. Its function is as follows. An essential GTPase which binds GTP, GDP and possibly (p)ppGpp with moderate affinity, with high nucleotide exchange rates and a fairly low GTP hydrolysis rate. Plays a role in control of the cell cycle, stress response, ribosome biogenesis and in those bacteria that undergo differentiation, in morphogenesis control. The sequence is that of GTPase Obg from Thermodesulfovibrio yellowstonii (strain ATCC 51303 / DSM 11347 / YP87).